Here is a 200-residue protein sequence, read N- to C-terminus: Dephospho-CoA kinase (200 aa).

The 198-residue stretch at 3–200 (VLGLTGSIGM…LSGKPAAATR (198 aa)) folds into the DPCK domain. 11 to 16 (GMGKTT) contributes to the ATP binding site.

Belongs to the CoaE family.

Its subcellular location is the cytoplasm. The enzyme catalyses 3'-dephospho-CoA + ATP = ADP + CoA + H(+). The protein operates within cofactor biosynthesis; coenzyme A biosynthesis; CoA from (R)-pantothenate: step 5/5. Functionally, catalyzes the phosphorylation of the 3'-hydroxyl group of dephosphocoenzyme A to form coenzyme A. The protein is Dephospho-CoA kinase of Brucella melitensis biotype 1 (strain ATCC 23456 / CCUG 17765 / NCTC 10094 / 16M).